The following is a 498-amino-acid chain: Ulvan-active sulfatase (498 aa).

A signal peptide spans 1–22 (MNSKKTGVIILGCIAFLHIACS). Ca(2+)-binding residues include D55, D56, C95, D266, and H267. C95 (nucleophile) is an active-site residue. C95 is subject to 3-oxoalanine (Cys).

Belongs to the sulfatase family. It depends on Ca(2+) as a cofactor. In terms of processing, the conversion to 3-oxoalanine (also known as C-formylglycine, FGly), of a serine or cysteine residue in prokaryotes and of a cysteine residue in eukaryotes, is critical for catalytic activity. This post-translational modification is severely defective in multiple sulfatase deficiency (MSD).

The protein resides in the periplasm. Its function is as follows. Sulfatase involved in ulvan degradation. Ulvan is the main polysaccharide component of the Ulvales (green seaweed) cell wall. It is composed of disaccharide building blocks comprising 3-sulfated rhamnose (Rha3S) linked to D-glucuronic acid (GlcA), L-iduronic acid (IduA), or D-xylose (Xyl). The sequence is that of Ulvan-active sulfatase from Formosa agariphila (strain DSM 15362 / KCTC 12365 / LMG 23005 / KMM 3901 / M-2Alg 35-1).